The primary structure comprises 211 residues: Large ribosomal subunit protein uL4 (211 aa).

The interval 52–79 (GRAEVHGSNSKPYSQKGTGRARRGDKKS) is disordered. Over residues 58–68 (GSNSKPYSQKG) the composition is skewed to polar residues.

The protein belongs to the universal ribosomal protein uL4 family. In terms of assembly, part of the 50S ribosomal subunit.

In terms of biological role, one of the primary rRNA binding proteins, this protein initially binds near the 5'-end of the 23S rRNA. It is important during the early stages of 50S assembly. It makes multiple contacts with different domains of the 23S rRNA in the assembled 50S subunit and ribosome. Its function is as follows. Forms part of the polypeptide exit tunnel. This Treponema denticola (strain ATCC 35405 / DSM 14222 / CIP 103919 / JCM 8153 / KCTC 15104) protein is Large ribosomal subunit protein uL4.